The following is a 349-amino-acid chain: Protein pelota homolog (349 aa).

Belongs to the eukaryotic release factor 1 family. Pelota subfamily. As to quaternary structure, monomer. It depends on a divalent metal cation as a cofactor.

Its subcellular location is the cytoplasm. Functionally, may function in recognizing stalled ribosomes, interact with stem-loop structures in stalled mRNA molecules, and effect endonucleolytic cleavage of the mRNA. May play a role in the release non-functional ribosomes and degradation of damaged mRNAs. Has endoribonuclease activity. The polypeptide is Protein pelota homolog (Nitrosopumilus maritimus (strain SCM1)).